The sequence spans 281 residues: MNLPANTALFTPSWHAELELGYGRFDDCTRPTQRRHKGPLRVQKHLYAEGPQVCQHIIVHPPGGIAGGDRLDISATVGADAWAQLTSPGAAKWYRAASPAFQQLELHVQPGATLEWLPQETIVFSNAQAELTTRIELHGDAKLCYWDVVALGRPASGERFEQGHFQSHLDIRRDGTLLWHERQRIIGGDGLLDSPIGLDGKTVFATLLLTGEVSSDLLEACRSLSMPNPVRGDLTQLPGLVVARCLADEALHARAWLIQIWKYLRPALLGRQAVTPRIWNT.

This sequence belongs to the UreD family. In terms of assembly, ureD, UreF and UreG form a complex that acts as a GTP-hydrolysis-dependent molecular chaperone, activating the urease apoprotein by helping to assemble the nickel containing metallocenter of UreC. The UreE protein probably delivers the nickel.

It is found in the cytoplasm. Its function is as follows. Required for maturation of urease via the functional incorporation of the urease nickel metallocenter. This Pseudomonas savastanoi pv. phaseolicola (strain 1448A / Race 6) (Pseudomonas syringae pv. phaseolicola (strain 1448A / Race 6)) protein is Urease accessory protein UreD.